The primary structure comprises 600 residues: Putative fucosyltransferase R654 (600 aa).

It belongs to the glycosyltransferase 10 family.

The chain is Putative fucosyltransferase R654 from Acanthamoeba polyphaga mimivirus (APMV).